The following is a 525-amino-acid chain: GMP synthase [glutamine-hydrolyzing] (525 aa).

The Glutamine amidotransferase type-1 domain occupies 9-207; that stretch reads RILILDFGSQ…VLEICGCAAL (199 aa). The active-site Nucleophile is cysteine 86. Catalysis depends on residues histidine 181 and glutamate 183. One can recognise a GMPS ATP-PPase domain in the interval 208–400; that stretch reads WTPATIIEDA…LGLPYDMLYR (193 aa). Position 235-241 (235-241) interacts with ATP; the sequence is SGGVDSS.

In terms of assembly, homodimer.

The enzyme catalyses XMP + L-glutamine + ATP + H2O = GMP + L-glutamate + AMP + diphosphate + 2 H(+). It functions in the pathway purine metabolism; GMP biosynthesis; GMP from XMP (L-Gln route): step 1/1. In terms of biological role, catalyzes the synthesis of GMP from XMP. The sequence is that of GMP synthase [glutamine-hydrolyzing] from Edwardsiella ictaluri (strain 93-146).